The primary structure comprises 414 residues: Secernin-1 (414 aa).

Position 2 is an N-acetylalanine (Ala2). Cys9 is a catalytic residue.

Belongs to the peptidase C69 family. Secernin subfamily.

The protein resides in the cytoplasm. Its function is as follows. Regulates exocytosis in mast cells. Increases both the extent of secretion and the sensitivity of mast cells to stimulation with calcium. This chain is Secernin-1 (SCRN1), found in Homo sapiens (Human).